A 488-amino-acid chain; its full sequence is Inosine-5'-monophosphate dehydrogenase (488 aa).

CBS domains are found at residues 95–153 and 157–216; these read VISN…SIKI and MTKD…AKDE. NAD(+) is bound by residues aspartate 250 and 300 to 302; that span reads GIG. Residues glycine 302 and glycine 304 each coordinate K(+). IMP is bound at residue serine 305. Cysteine 307 contacts K(+). The active-site Thioimidate intermediate is the cysteine 307. IMP contacts are provided by residues 340-342, 363-364, and 387-391; these read DGG, GS, and YRGMG. The active-site Proton acceptor is the arginine 403. Glutamate 417 is an IMP binding site. Positions 467–488 are disordered; that stretch reads AGLAESHPHNVQITKESPNYSF. Glutamate 471, serine 472, and histidine 473 together coordinate K(+). The segment covering 475–488 has biased composition (polar residues); the sequence is HNVQITKESPNYSF.

It belongs to the IMPDH/GMPR family. Homotetramer. The cofactor is K(+).

It catalyses the reaction IMP + NAD(+) + H2O = XMP + NADH + H(+). It participates in purine metabolism; XMP biosynthesis via de novo pathway; XMP from IMP: step 1/1. Mycophenolic acid (MPA) is a non-competitive inhibitor that prevents formation of the closed enzyme conformation by binding to the same site as the amobile flap. In contrast, mizoribine monophosphate (MZP) is a competitive inhibitor that induces the closed conformation. MPA is a potent inhibitor of mammalian IMPDHs but a poor inhibitor of the bacterial enzymes. MZP is a more potent inhibitor of bacterial IMPDH. Catalyzes the conversion of inosine 5'-phosphate (IMP) to xanthosine 5'-phosphate (XMP), the first committed and rate-limiting step in the de novo synthesis of guanine nucleotides, and therefore plays an important role in the regulation of cell growth. This Staphylococcus epidermidis (strain ATCC 35984 / DSM 28319 / BCRC 17069 / CCUG 31568 / BM 3577 / RP62A) protein is Inosine-5'-monophosphate dehydrogenase.